Reading from the N-terminus, the 360-residue chain is MWRSIISFLFFSVALCQPFLFQKRSSNISDFISFNASLPNVTIFAMGGTIAGYASSSTETVDYAAGSVGIATLVDAVPAIKNFSNIRGVQVTNVGSEELTPANVLNLTQLILAEVAKPDVHGIVVTHGTDSLEETAMFLDMTVNTTKPIVVVGAMRPSTAISADGPMNLLNAVVVAASNRSIGRGTMILLNDRIGSAFYTTKTNGNMLDTFKSYEAGFLGMILDQRPHFFYSPATPTGKVHFDVSNTTELPAVEILYGYQGLNPNLAKAAVDLGAKGLVLAGMGAASWTDPGNEVIDGLISNQSIPVVYSHRTMDGFSDYYYNGIPSYFQNPQKARYMLMLSINAGYSIQNITDIFSLEY.

The first 16 residues, 1–16, serve as a signal peptide directing secretion; the sequence is MWRSIISFLFFSVALC. Asn-27, Asn-35, and Asn-40 each carry an N-linked (GlcNAc...) asparagine glycan. The Asparaginase/glutaminase domain maps to 39–359; sequence PNVTIFAMGG…QNITDIFSLE (321 aa). The O-isoaspartyl threonine intermediate role is filled by Thr-49. Asn-82 is a glycosylation site (N-linked (GlcNAc...) asparagine). Ser-96 lines the substrate pocket. A glycan (N-linked (GlcNAc...) asparagine) is linked at Asn-106. 129 to 130 contributes to the substrate binding site; sequence TD. Residues Asn-144, Asn-179, Asn-246, Asn-302, and Asn-351 are each glycosylated (N-linked (GlcNAc...) asparagine).

This sequence belongs to the asparaginase 1 family.

The protein resides in the secreted. It is found in the cell wall. It catalyses the reaction L-asparagine + H2O = L-aspartate + NH4(+). The sequence is that of Probable L-asparaginase 1 from Schizosaccharomyces pombe (strain 972 / ATCC 24843) (Fission yeast).